Consider the following 449-residue polypeptide: C4-dicarboxylate transport protein (449 aa).

8 helical membrane passes run 18 to 38 (PFYL…ALLG), 61 to 81 (MIIS…VAHV), 93 to 113 (VYFL…AHVV), 159 to 179 (FVGD…IALA), 202 to 222 (LVQM…AFTI), 244 to 264 (SLLF…FSIL), 311 to 331 (GYSF…LFIA), and 369 to 389 (AATL…ILGV).

The protein belongs to the dicarboxylate/amino acid:cation symporter (DAACS) (TC 2.A.23) family.

The protein localises to the cell inner membrane. In terms of biological role, responsible for the transport of dicarboxylates such as succinate, fumarate, and malate from the periplasm across the membrane. This chain is C4-dicarboxylate transport protein, found in Xylella fastidiosa (strain M12).